A 104-amino-acid chain; its full sequence is Small ribosomal subunit protein uS10 (104 aa).

Belongs to the universal ribosomal protein uS10 family. Part of the 30S ribosomal subunit.

Involved in the binding of tRNA to the ribosomes. This Helicobacter pylori (strain J99 / ATCC 700824) (Campylobacter pylori J99) protein is Small ribosomal subunit protein uS10.